The chain runs to 103 residues: MYAVFQSGGKQHRVAEGQIVRLEKLNVETGATIDFNEVLMVAAGDTFKVGAPFVEGGKVVAEVVAHGRGEKVTIVKFRRRKHHRKQAGHRQWFTEVKITGISA.

The protein belongs to the bacterial ribosomal protein bL21 family. Part of the 50S ribosomal subunit. Contacts protein L20.

Functionally, this protein binds to 23S rRNA in the presence of protein L20. The protein is Large ribosomal subunit protein bL21 of Aeromonas hydrophila subsp. hydrophila (strain ATCC 7966 / DSM 30187 / BCRC 13018 / CCUG 14551 / JCM 1027 / KCTC 2358 / NCIMB 9240 / NCTC 8049).